The sequence spans 238 residues: 3-dehydroquinate dehydratase (238 aa).

Residues 35–37 and Arg70 each bind 3-dehydroquinate; that span reads ELR. His133 acts as the Proton donor/acceptor in catalysis. The active-site Schiff-base intermediate with substrate is the Lys160. Residues Arg202 and Gln225 each coordinate 3-dehydroquinate.

The protein belongs to the type-I 3-dehydroquinase family. As to quaternary structure, homodimer.

The catalysed reaction is 3-dehydroquinate = 3-dehydroshikimate + H2O. It functions in the pathway metabolic intermediate biosynthesis; chorismate biosynthesis; chorismate from D-erythrose 4-phosphate and phosphoenolpyruvate: step 3/7. Its function is as follows. Involved in the third step of the chorismate pathway, which leads to the biosynthesis of aromatic amino acids. Catalyzes the cis-dehydration of 3-dehydroquinate (DHQ) and introduces the first double bond of the aromatic ring to yield 3-dehydroshikimate. The polypeptide is 3-dehydroquinate dehydratase (Staphylococcus aureus (strain MRSA252)).